The sequence spans 379 residues: UDP-4-amino-4-deoxy-L-arabinose--oxoglutarate aminotransferase (379 aa).

At K182 the chain carries N6-(pyridoxal phosphate)lysine.

Belongs to the DegT/DnrJ/EryC1 family. ArnB subfamily. Homodimer. It depends on pyridoxal 5'-phosphate as a cofactor.

It catalyses the reaction UDP-4-amino-4-deoxy-beta-L-arabinose + 2-oxoglutarate = UDP-beta-L-threo-pentopyranos-4-ulose + L-glutamate. The protein operates within nucleotide-sugar biosynthesis; UDP-4-deoxy-4-formamido-beta-L-arabinose biosynthesis; UDP-4-deoxy-4-formamido-beta-L-arabinose from UDP-alpha-D-glucuronate: step 2/3. Its pathway is bacterial outer membrane biogenesis; lipopolysaccharide biosynthesis. Catalyzes the conversion of UDP-4-keto-arabinose (UDP-Ara4O) to UDP-4-amino-4-deoxy-L-arabinose (UDP-L-Ara4N). The modified arabinose is attached to lipid A and is required for resistance to polymyxin and cationic antimicrobial peptides. The polypeptide is UDP-4-amino-4-deoxy-L-arabinose--oxoglutarate aminotransferase (Salmonella agona (strain SL483)).